Here is a 253-residue protein sequence, read N- to C-terminus: UPF0246 protein lhv_1883 (253 aa).

Belongs to the UPF0246 family.

The protein is UPF0246 protein lhv_1883 of Lactobacillus helveticus (strain DPC 4571).